The sequence spans 254 residues: Glucosamine-6-phosphate deaminase (254 aa).

D65 (proton acceptor; for enolization step) is an active-site residue. The active-site For ring-opening step is N134. H136 acts as the Proton acceptor; for ring-opening step in catalysis. The For ring-opening step role is filled by E141.

The protein belongs to the glucosamine/galactosamine-6-phosphate isomerase family. NagB subfamily.

The enzyme catalyses alpha-D-glucosamine 6-phosphate + H2O = beta-D-fructose 6-phosphate + NH4(+). Its pathway is amino-sugar metabolism; N-acetylneuraminate degradation; D-fructose 6-phosphate from N-acetylneuraminate: step 5/5. In terms of biological role, catalyzes the reversible isomerization-deamination of glucosamine 6-phosphate (GlcN6P) to form fructose 6-phosphate (Fru6P) and ammonium ion. The chain is Glucosamine-6-phosphate deaminase from Corynebacterium aurimucosum (strain ATCC 700975 / DSM 44827 / CIP 107346 / CN-1) (Corynebacterium nigricans).